Here is a 291-residue protein sequence, read N- to C-terminus: Homoserine kinase (291 aa).

80–90 serves as a coordination point for ATP; that stretch reads RPASGLGSSAA.

Belongs to the GHMP kinase family. Homoserine kinase subfamily.

Its subcellular location is the cytoplasm. The catalysed reaction is L-homoserine + ATP = O-phospho-L-homoserine + ADP + H(+). It participates in amino-acid biosynthesis; L-threonine biosynthesis; L-threonine from L-aspartate: step 4/5. Its function is as follows. Catalyzes the ATP-dependent phosphorylation of L-homoserine to L-homoserine phosphate. The chain is Homoserine kinase from Natronomonas pharaonis (strain ATCC 35678 / DSM 2160 / CIP 103997 / JCM 8858 / NBRC 14720 / NCIMB 2260 / Gabara) (Halobacterium pharaonis).